A 620-amino-acid chain; its full sequence is UvrABC system protein C (620 aa).

In terms of domain architecture, GIY-YIG spans 13 to 92 (DKPGVYIMKN…IKKYSPRYNI (80 aa)). The 36-residue stretch at 204–239 (TSIIKKLKLEMEKAAEELEFEKAAKIRDRILAIELI) folds into the UVR domain.

Belongs to the UvrC family. In terms of assembly, interacts with UvrB in an incision complex.

It localises to the cytoplasm. In terms of biological role, the UvrABC repair system catalyzes the recognition and processing of DNA lesions. UvrC both incises the 5' and 3' sides of the lesion. The N-terminal half is responsible for the 3' incision and the C-terminal half is responsible for the 5' incision. This is UvrABC system protein C from Clostridium perfringens (strain 13 / Type A).